The chain runs to 211 residues: V-type ATP synthase subunit D (211 aa).

The protein belongs to the V-ATPase D subunit family.

Functionally, produces ATP from ADP in the presence of a proton gradient across the membrane. This Fusobacterium nucleatum subsp. nucleatum (strain ATCC 25586 / DSM 15643 / BCRC 10681 / CIP 101130 / JCM 8532 / KCTC 2640 / LMG 13131 / VPI 4355) protein is V-type ATP synthase subunit D.